Consider the following 187-residue polypeptide: Elongation factor P (187 aa).

This sequence belongs to the elongation factor P family.

It localises to the cytoplasm. The protein operates within protein biosynthesis; polypeptide chain elongation. In terms of biological role, involved in peptide bond synthesis. Stimulates efficient translation and peptide-bond synthesis on native or reconstituted 70S ribosomes in vitro. Probably functions indirectly by altering the affinity of the ribosome for aminoacyl-tRNA, thus increasing their reactivity as acceptors for peptidyl transferase. This Kocuria rhizophila (strain ATCC 9341 / DSM 348 / NBRC 103217 / DC2201) protein is Elongation factor P.